Reading from the N-terminus, the 235-residue chain is Ribosomal RNA small subunit methyltransferase G (235 aa).

S-adenosyl-L-methionine is bound by residues Gly-74, Phe-79, 97-99 (EAT), 125-126 (AE), and Arg-144.

It belongs to the methyltransferase superfamily. RNA methyltransferase RsmG family.

The protein localises to the cytoplasm. Its function is as follows. Specifically methylates the N7 position of a guanine in 16S rRNA. The sequence is that of Ribosomal RNA small subunit methyltransferase G from Dehalococcoides mccartyi (strain CBDB1).